We begin with the raw amino-acid sequence, 211 residues long: ATP-dependent Clp protease proteolytic subunit 2 (211 aa).

The active-site Nucleophile is Ser-106. Residue His-131 is part of the active site.

The protein belongs to the peptidase S14 family. In terms of assembly, fourteen ClpP subunits assemble into 2 heptameric rings which stack back to back to give a disk-like structure with a central cavity, resembling the structure of eukaryotic proteasomes.

It localises to the cytoplasm. The catalysed reaction is Hydrolysis of proteins to small peptides in the presence of ATP and magnesium. alpha-casein is the usual test substrate. In the absence of ATP, only oligopeptides shorter than five residues are hydrolyzed (such as succinyl-Leu-Tyr-|-NHMec, and Leu-Tyr-Leu-|-Tyr-Trp, in which cleavage of the -Tyr-|-Leu- and -Tyr-|-Trp bonds also occurs).. Functionally, cleaves peptides in various proteins in a process that requires ATP hydrolysis. Has a chymotrypsin-like activity. Plays a major role in the degradation of misfolded proteins. The sequence is that of ATP-dependent Clp protease proteolytic subunit 2 from Bradyrhizobium diazoefficiens (strain JCM 10833 / BCRC 13528 / IAM 13628 / NBRC 14792 / USDA 110).